The following is a 54-amino-acid chain: Large ribosomal subunit protein bL32c (54 aa).

This sequence belongs to the bacterial ribosomal protein bL32 family.

The protein resides in the plastid. It localises to the chloroplast. This Helianthus annuus (Common sunflower) protein is Large ribosomal subunit protein bL32c.